A 324-amino-acid polypeptide reads, in one-letter code: tRNA U34 carboxymethyltransferase (324 aa).

Carboxy-S-adenosyl-L-methionine contacts are provided by residues lysine 92, tryptophan 106, lysine 111, glycine 131, 181 to 182 (LE), methionine 197, tyrosine 201, and arginine 316.

This sequence belongs to the class I-like SAM-binding methyltransferase superfamily. CmoB family. As to quaternary structure, homotetramer.

It catalyses the reaction carboxy-S-adenosyl-L-methionine + 5-hydroxyuridine(34) in tRNA = 5-carboxymethoxyuridine(34) in tRNA + S-adenosyl-L-homocysteine + H(+). Functionally, catalyzes carboxymethyl transfer from carboxy-S-adenosyl-L-methionine (Cx-SAM) to 5-hydroxyuridine (ho5U) to form 5-carboxymethoxyuridine (cmo5U) at position 34 in tRNAs. This chain is tRNA U34 carboxymethyltransferase, found in Syntrophotalea carbinolica (strain DSM 2380 / NBRC 103641 / GraBd1) (Pelobacter carbinolicus).